Consider the following 449-residue polypeptide: Phosphoglucosamine mutase (449 aa).

Ser-101 acts as the Phosphoserine intermediate in catalysis. Mg(2+) contacts are provided by Ser-101, Asp-241, Asp-243, and Asp-245. Ser-101 carries the phosphoserine modification.

The protein belongs to the phosphohexose mutase family. It depends on Mg(2+) as a cofactor. In terms of processing, activated by phosphorylation.

It catalyses the reaction alpha-D-glucosamine 1-phosphate = D-glucosamine 6-phosphate. In terms of biological role, catalyzes the conversion of glucosamine-6-phosphate to glucosamine-1-phosphate. This chain is Phosphoglucosamine mutase, found in Alkaliphilus oremlandii (strain OhILAs) (Clostridium oremlandii (strain OhILAs)).